We begin with the raw amino-acid sequence, 503 residues long: Lysine--tRNA ligase (503 aa).

Glu-410 and Glu-417 together coordinate Mg(2+).

This sequence belongs to the class-II aminoacyl-tRNA synthetase family. Homodimer. Mg(2+) serves as cofactor.

It localises to the cytoplasm. The enzyme catalyses tRNA(Lys) + L-lysine + ATP = L-lysyl-tRNA(Lys) + AMP + diphosphate. The sequence is that of Lysine--tRNA ligase from Prochlorococcus marinus (strain MIT 9211).